A 258-amino-acid chain; its full sequence is Imidazole glycerol phosphate synthase subunit HisF (258 aa).

Catalysis depends on residues Asp11 and Asp130.

The protein belongs to the HisA/HisF family. As to quaternary structure, heterodimer of HisH and HisF.

The protein localises to the cytoplasm. The enzyme catalyses 5-[(5-phospho-1-deoxy-D-ribulos-1-ylimino)methylamino]-1-(5-phospho-beta-D-ribosyl)imidazole-4-carboxamide + L-glutamine = D-erythro-1-(imidazol-4-yl)glycerol 3-phosphate + 5-amino-1-(5-phospho-beta-D-ribosyl)imidazole-4-carboxamide + L-glutamate + H(+). It participates in amino-acid biosynthesis; L-histidine biosynthesis; L-histidine from 5-phospho-alpha-D-ribose 1-diphosphate: step 5/9. Functionally, IGPS catalyzes the conversion of PRFAR and glutamine to IGP, AICAR and glutamate. The HisF subunit catalyzes the cyclization activity that produces IGP and AICAR from PRFAR using the ammonia provided by the HisH subunit. In Haemophilus influenzae (strain 86-028NP), this protein is Imidazole glycerol phosphate synthase subunit HisF.